A 463-amino-acid polypeptide reads, in one-letter code: Hydroxyacid-oxoacid transhydrogenase, mitochondrial (463 aa).

Belongs to the iron-containing alcohol dehydrogenase family. Hydroxyacid-oxoacid transhydrogenase subfamily.

The protein resides in the mitochondrion. The enzyme catalyses (S)-3-hydroxybutanoate + 2-oxoglutarate = (R)-2-hydroxyglutarate + acetoacetate. It carries out the reaction 4-hydroxybutanoate + 2-oxoglutarate = (R)-2-hydroxyglutarate + succinate semialdehyde. Its function is as follows. Catalyzes the cofactor-independent reversible oxidation of gamma-hydroxybutyrate (GHB) to succinic semialdehyde (SSA) coupled to reduction of 2-ketoglutarate (2-KG) to D-2-hydroxyglutarate (D-2-HG). L-3-hydroxybutyrate (L-3-OHB) is also a substrate for HOT when using 2-KG as hydrogen acceptor, resulting in the formation of D-2-HG. The polypeptide is Hydroxyacid-oxoacid transhydrogenase, mitochondrial (adhfe1) (Xenopus laevis (African clawed frog)).